A 557-amino-acid chain; its full sequence is Transmembrane protein 209 (557 aa).

The chain crosses the membrane as a helical span at residues Val-28–Thr-48. The N-linked (GlcNAc...) asparagine glycan is linked to Asn-57. The helical transmembrane segment at Tyr-60–Phe-80 threads the bilayer. Disordered regions lie at residues Pro-108 to Pro-156 and Tyr-194 to Glu-232. Polar residues predominate over residues Val-125 to Leu-140. Composition is skewed to low complexity over residues Ser-141–Pro-156, Tyr-194–Ser-205, and Arg-219–Pro-228. Residues Asn-273 and Asn-343 are each glycosylated (N-linked (GlcNAc...) asparagine).

The protein resides in the membrane. The protein localises to the nucleus envelope. It localises to the golgi apparatus. It is found in the cytoplasm. This chain is Transmembrane protein 209 (tmem209), found in Xenopus tropicalis (Western clawed frog).